Consider the following 2648-residue polypeptide: E3 ubiquitin-protein ligase hecd-1 (2648 aa).

ANK repeat units follow at residues 374–403 and 405–434; these read VGQS…DVNK and HKSS…NPDL. Positions 433–455 are enriched in basic and acidic residues; sequence DLRDEDGKTALDKARERSDDDHN. Disordered regions lie at residues 433 to 494, 645 to 714, and 1376 to 1400; these read DLRD…ELPN, PMEI…KATA, and DPPK…ALPP. 3 stretches are compositionally biased toward polar residues: residues 478–489, 652–661, and 670–688; these read ASTSKQPGTSTK, NQPSSSTAVP, and TVPS…NPST. Composition is skewed to low complexity over residues 696 to 714 and 1383 to 1400; these read SSTP…KATA and PAGT…ALPP. One can recognise an MIB/HERC2 domain in the interval 1438 to 1510; that stretch reads RSRGSYKISE…NFDIERVTST (73 aa). Disordered regions lie at residues 1538–1562, 1575–1629, 1652–1796, and 1811–1836; these read YTPK…GSSR, KNTT…SLQH, NQEP…LLGG, and ESLS…GKKP. Composition is skewed to low complexity over residues 1543-1562 and 1575-1586; these read TGGP…GSSR and KNTTPAGTPSSG. A compositionally biased stretch (polar residues) spans 1610–1629; it reads TSGPSVASTGQAASAESLQH. Acidic residues predominate over residues 1653 to 1666; it reads QEPEDEPMGGEESD. Over residues 1667 to 1696 the composition is skewed to low complexity; sequence SAASMRSAASSNSQMSMGSSSQQQQQQDSD. 2 stretches are compositionally biased toward acidic residues: residues 1736 to 1746 and 1756 to 1783; these read TDGDADADETN and DAME…DESS. Residues 1812–1823 are compositionally biased toward low complexity; that stretch reads SLSDASSSAKDA. Residues 2240–2648 form the HECT domain; sequence FHADRKAVLE…AINEKGFHLN (409 aa). Cys-2617 acts as the Glycyl thioester intermediate in catalysis.

Belongs to the UPL family. K-HECT subfamily. Expressed in most tissues, including hypodermis, muscle, intestine, vulva, and neurons.

It carries out the reaction S-ubiquitinyl-[E2 ubiquitin-conjugating enzyme]-L-cysteine + [acceptor protein]-L-lysine = [E2 ubiquitin-conjugating enzyme]-L-cysteine + N(6)-ubiquitinyl-[acceptor protein]-L-lysine.. It functions in the pathway protein modification; protein ubiquitination. E3 ubiquitin-protein ligase which accepts ubiquitin from an E2 ubiquitin-conjugating enzyme in the form of a thioester and then directly transfers the ubiquitin to targeted substrates. Involved in the ubiquitination and proteasomal-mediated degradation of cytoplasmic and mitochondrial proteins. Positively regulates lin-12 activity in the anchor cell (AC)/vulval precursor (VU) cell fate decision. Negatively regulates glp-1 activity in germline proliferation. May play a role in the formation of fibrous organelles, a hemidesmosome-like structure attaching muscles to the epidermis. Regulates germline DNA double-strand-break repair and apoptosis in response to DNA damage by recruiting E4 ubiquitin-protein ligase ufd-2 to DNA repair foci. This Caenorhabditis elegans protein is E3 ubiquitin-protein ligase hecd-1.